Consider the following 97-residue polypeptide: uncharacterized protein (97 aa).

This is an uncharacterized protein from Sulfolobus islandicus filamentous virus (isolate Iceland/Hveragerdi) (SIFV).